The chain runs to 291 residues: Phytanoyl-CoA dioxygenase domain-containing protein 1 (291 aa).

Threonine 55 bears the Phosphothreonine mark. Residues lysine 102, methionine 141, 156–158 (HQD), and tryptophan 174 contribute to the 2-oxoglutarate site. Residues histidine 156 and aspartate 158 each contribute to the Fe cation site. A Fe cation-binding site is contributed by histidine 246. 2-oxoglutarate-binding residues include serine 248 and arginine 257.

It belongs to the PhyH family. PHYHD1 subfamily. Requires Fe cation as cofactor.

With respect to regulation, activity is increased by ascorbate. Inhibited by myristoyl-CoA. Functionally, 2-oxoglutarate(2OG)-dependent dioxygenase that catalyzes the conversion of 2-oxoglutarate to succinate and CO(2) in an iron-dependent manner. However, does not couple 2OG turnover to the hydroxylation of acyl-coenzyme A derivatives, implying that it is not directly involved in phytanoyl coenzyme-A metabolism. Does not show detectable activity towards fatty acid CoA thioesters. In terms of biological role, isoform 2 probably lacks enzyme activity. Isoform 3 probably lacks enzyme activity. This chain is Phytanoyl-CoA dioxygenase domain-containing protein 1, found in Homo sapiens (Human).